Reading from the N-terminus, the 163-residue chain is Ribosome maturation factor RimM (163 aa).

Residues 90–155 form the PRC barrel domain; the sequence is VGEYYCKDLV…ADIDLNKKRL (66 aa).

This sequence belongs to the RimM family. As to quaternary structure, binds ribosomal protein uS19.

The protein localises to the cytoplasm. An accessory protein needed during the final step in the assembly of 30S ribosomal subunit, possibly for assembly of the head region. Essential for efficient processing of 16S rRNA. May be needed both before and after RbfA during the maturation of 16S rRNA. It has affinity for free ribosomal 30S subunits but not for 70S ribosomes. This Neorickettsia sennetsu (strain ATCC VR-367 / Miyayama) (Ehrlichia sennetsu) protein is Ribosome maturation factor RimM.